Here is a 420-residue protein sequence, read N- to C-terminus: Serine hydroxymethyltransferase (420 aa).

(6S)-5,6,7,8-tetrahydrofolate is bound by residues Leu-123 and 127 to 129; that span reads GHL. The residue at position 232 (Lys-232) is an N6-(pyridoxal phosphate)lysine. Residue 357-359 coordinates (6S)-5,6,7,8-tetrahydrofolate; that stretch reads SPF.

This sequence belongs to the SHMT family. In terms of assembly, homodimer. Requires pyridoxal 5'-phosphate as cofactor.

The protein localises to the cytoplasm. It catalyses the reaction (6R)-5,10-methylene-5,6,7,8-tetrahydrofolate + glycine + H2O = (6S)-5,6,7,8-tetrahydrofolate + L-serine. It functions in the pathway one-carbon metabolism; tetrahydrofolate interconversion. It participates in amino-acid biosynthesis; glycine biosynthesis; glycine from L-serine: step 1/1. Functionally, catalyzes the reversible interconversion of serine and glycine with tetrahydrofolate (THF) serving as the one-carbon carrier. This reaction serves as the major source of one-carbon groups required for the biosynthesis of purines, thymidylate, methionine, and other important biomolecules. Also exhibits THF-independent aldolase activity toward beta-hydroxyamino acids, producing glycine and aldehydes, via a retro-aldol mechanism. In Streptococcus pyogenes serotype M12 (strain MGAS2096), this protein is Serine hydroxymethyltransferase.